The chain runs to 775 residues: Endothelin-converting enzyme-like 1 (775 aa).

Topologically, residues 1–61 (MEAPYSMTAH…LPRWNRREVC (61 aa)) are cytoplasmic. The disordered stretch occupies residues 23-51 (CGTGGARGTSLPPGFPRSSGRSASGARSG). The segment covering 32 to 51 (SLPPGFPRSSGRSASGARSG) has biased composition (low complexity). The helical; Signal-anchor for type II membrane protein transmembrane segment at 62–82 (LLSGLVFAAGLCAILAAMLAL) threads the bilayer. Residues 83 to 775 (KYLGPGAAGT…MNPVHKCSVW (693 aa)) lie on the Lumenal side of the membrane. The Peptidase M13 domain maps to 99 to 775 (GCPERKAFAR…MNPVHKCSVW (677 aa)). 4 disulfide bridges follow: cysteine 124-cysteine 760, cysteine 132-cysteine 720, cysteine 188-cysteine 441, and cysteine 649-cysteine 772. N-linked (GlcNAc...) asparagine glycosylation is found at asparagine 255 and asparagine 322. A Zn(2+)-binding site is contributed by histidine 612. The active site involves glutamate 613. Histidine 616 is a binding site for Zn(2+). An N-linked (GlcNAc...) asparagine glycan is attached at asparagine 656. Residue glutamate 672 participates in Zn(2+) binding. The Proton donor role is filled by aspartate 676.

The protein belongs to the peptidase M13 family. The cofactor is Zn(2+). In terms of tissue distribution, highly expressed in the CNS, in particular in neurons of the caudate putamen, diagonal band, the paraventricular nucleus of the thalamus, part of the hypothalamus, in cranial motor nuclei, inferior olive, and substantia gelatinosa of the spinal tract trigeminal nucleus. Not detected in cerebral cortex, hippocampus and cerebellum.

Its subcellular location is the membrane. May contribute to the degradation of peptide hormones and be involved in the inactivation of neuronal peptides. Cleaves the synthetic substrate Z-Gly-Gly-Leu-pNA and releases pNA. May protect against C2-ceramide-induced apoptosis. This chain is Endothelin-converting enzyme-like 1 (Ecel1), found in Rattus norvegicus (Rat).